Consider the following 780-residue polypeptide: Subtilisin-like protease SBT1.3 (780 aa).

Residues 1–25 (MANKNPLQKPFLFIILSINLIFLQA) form the signal peptide. The propeptide at 26-120 (ETTTQISTKK…VIPETRYELH (95 aa)) is activation peptide. An Inhibitor I9 domain is found at 36 to 120 (TYVIHMDKSA…VIPETRYELH (85 aa)). The region spanning 116 to 628 (RYELHTTRSP…AGHIDPLRAT (513 aa)) is the Peptidase S8 domain. Residue aspartate 154 is the Charge relay system of the active site. Asparagine 165 carries N-linked (GlcNAc...) asparagine glycosylation. The Charge relay system role is filled by histidine 227. The region spanning 384–477 (KQYPLVYLGR…GEKEGKLIKQ (94 aa)) is the PA domain. N-linked (GlcNAc...) asparagine glycosylation occurs at asparagine 394. The Charge relay system role is filled by serine 560. Residues asparagine 663 and asparagine 731 are each glycosylated (N-linked (GlcNAc...) asparagine).

This sequence belongs to the peptidase S8 family.

It localises to the secreted. This Arabidopsis thaliana (Mouse-ear cress) protein is Subtilisin-like protease SBT1.3.